Here is a 295-residue protein sequence, read N- to C-terminus: Hydroxylase/desaturase efuI (295 aa).

This sequence belongs to the asaB hydroxylase/desaturase family.

The protein operates within secondary metabolite biosynthesis; terpenoid biosynthesis. In terms of biological role, hydroxylase/desaturase; part of the gene cluster that mediates the biosynthesis of enfumafungin, a glycosylated fernene-type triterpenoid with potent antifungal activity, mediated by its interaction with beta-1,3-glucan synthase and the fungal cell wall. The pathway begins with the terpene cyclase-glycosyl transferase fusion protein that most likely uses 2,3-oxidosqualene as substrate and catalyzes glycosylation immediately after cyclization. The fernene glycoside then could be processed by the desaturase efuI which catalyzes isomerization of a double bond established by efuA to form the core structure. The latter would then undergo a series of hydroxylations in unknown order at C-2, C-19, C-23 and C-25, which would be catalyzed by two of the three cytochrome P450 monooxygenases efuB, efuG or efuH. The hydroxy-group at C-25 becomes oxidized by the dehydrogenase efuE to enable a spontaneous, non-enzymatic hemiacetal formation with C-23. After hydroxylation at C-2, acetylation by the acetyltransferase efuC takes place. The final steps in enfumafungin biosynthesis require expansion of the 5-membered ring by lactonization via a Baeyer-Villiger reaction mediated by one of the BGC's cytochrome P450 monooxygenases (efuB, efuG or efuH) followed by ring cleavage. This type of reaction would establish a double bond between C-20 and C-21 which could be reduced by the reductase efuL to form the final product. The chain is Hydroxylase/desaturase efuI from Hormonema carpetanum.